We begin with the raw amino-acid sequence, 228 residues long: Sodium channel regulatory subunit beta-4 (228 aa).

The signal sequence occupies residues 1–30 (MPGAGDGGKAPARWLGTGLLGLFLLPVTLS). The Ig-like C2-type domain maps to 31–148 (LEVSVGKATD…NNLQHHATIF (118 aa)). Residues 31–162 (LEVSVGKATD…DRLEEVDNTV (132 aa)) are Extracellular-facing. N-linked (GlcNAc...) asparagine glycosylation is found at N45, N71, and N113. A disulfide bridge connects residues C53 and C131. A helical transmembrane segment spans residues 163 to 183 (TLIILAVVGGVIGLLILILLI). The Cytoplasmic portion of the chain corresponds to 184-228 (KKLIIFILKKTREKKKECLVSSSGNDNTENGLPGSKAEEKPPSKV). Residues 200–228 (ECLVSSSGNDNTENGLPGSKAEEKPPSKV) are disordered. Over residues 203–213 (VSSSGNDNTEN) the composition is skewed to polar residues. The segment covering 219–228 (KAEEKPPSKV) has biased composition (basic and acidic residues).

The protein belongs to the sodium channel auxiliary subunit SCN4B (TC 8.A.17) family. In terms of assembly, a voltage-gated sodium (Nav) channel consists of an ion-conducting pore-forming alpha subunit functional on its own that is regulated by one or more beta subunits. The beta subunit SCN4B is disulfide-linked to the pore-forming alpha subunit. Interacts with SCN1A; regulatory subunit of SCN1A/Nav1.1. Interacts with SCN2A; regulatory subunit of SCN2A/Nav1.2. Contains an interchain disulfide bond with SCN2A. In terms of processing, N-glycosylated. As to expression, expressed at a high level in dorsal root ganglia, at a lower level in brain, spinal cord, skeletal muscle and heart. Expressed in the atrium.

It localises to the cell membrane. Regulatory subunit of multiple voltage-gated sodium (Nav) channels directly mediating the depolarization of excitable membranes. Navs, also called VGSCs (voltage-gated sodium channels) or VDSCs (voltage-dependent sodium channels), operate by switching between closed and open conformations depending on the voltage difference across the membrane. In the open conformation they allow Na(+) ions to selectively pass through the pore, along their electrochemical gradient. The influx of Na+ ions provokes membrane depolarization, initiating the propagation of electrical signals throughout cells and tissues. The accessory beta subunits participate in localization and functional modulation of the Nav channels. Modulates the activity of SCN1A/Nav1.1. Modulates the activity of SCN2A/Nav1.2. This is Sodium channel regulatory subunit beta-4 from Homo sapiens (Human).